The sequence spans 422 residues: UDP-N-acetylglucosamine 1-carboxyvinyltransferase (422 aa).

Phosphoenolpyruvate is bound at residue 23 to 24 (KN). Arg-92 contributes to the UDP-N-acetyl-alpha-D-glucosamine binding site. The active-site Proton donor is Cys-116. Cys-116 carries the post-translational modification 2-(S-cysteinyl)pyruvic acid O-phosphothioketal. Residues 121 to 125 (RPVDL), 161 to 164 (KVSV), Asp-306, and Ile-328 each bind UDP-N-acetyl-alpha-D-glucosamine.

The protein belongs to the EPSP synthase family. MurA subfamily.

It localises to the cytoplasm. It carries out the reaction phosphoenolpyruvate + UDP-N-acetyl-alpha-D-glucosamine = UDP-N-acetyl-3-O-(1-carboxyvinyl)-alpha-D-glucosamine + phosphate. It functions in the pathway cell wall biogenesis; peptidoglycan biosynthesis. In terms of biological role, cell wall formation. Adds enolpyruvyl to UDP-N-acetylglucosamine. The polypeptide is UDP-N-acetylglucosamine 1-carboxyvinyltransferase (Aliivibrio salmonicida (strain LFI1238) (Vibrio salmonicida (strain LFI1238))).